Reading from the N-terminus, the 438-residue chain is GTPase Der (438 aa).

EngA-type G domains follow at residues proline 4 to serine 168 and threonine 177 to serine 352. GTP-binding positions include glycine 10 to serine 17, aspartate 57 to leucine 61, asparagine 120 to aspartate 123, glycine 183 to serine 190, aspartate 230 to leucine 234, and asparagine 295 to aspartate 298. Residues methionine 353–glycine 437 form the KH-like domain.

The protein belongs to the TRAFAC class TrmE-Era-EngA-EngB-Septin-like GTPase superfamily. EngA (Der) GTPase family. In terms of assembly, associates with the 50S ribosomal subunit.

Its function is as follows. GTPase that plays an essential role in the late steps of ribosome biogenesis. This Finegoldia magna (strain ATCC 29328 / DSM 20472 / WAL 2508) (Peptostreptococcus magnus) protein is GTPase Der.